Reading from the N-terminus, the 269-residue chain is Indole-3-glycerol phosphate synthase (269 aa).

This sequence belongs to the TrpC family.

The catalysed reaction is 1-(2-carboxyphenylamino)-1-deoxy-D-ribulose 5-phosphate + H(+) = (1S,2R)-1-C-(indol-3-yl)glycerol 3-phosphate + CO2 + H2O. It functions in the pathway amino-acid biosynthesis; L-tryptophan biosynthesis; L-tryptophan from chorismate: step 4/5. In Saccharopolyspora erythraea (strain ATCC 11635 / DSM 40517 / JCM 4748 / NBRC 13426 / NCIMB 8594 / NRRL 2338), this protein is Indole-3-glycerol phosphate synthase.